A 71-amino-acid chain; its full sequence is Gas vesicle protein A (71 aa).

The interval 12–22 (LAEVIDRILDK) is alpha helix 1. Residues 23–32 (GIVIDAWVRV) form a beta-strand 1 region. A beta turn region spans residues 33-36 (SLVG). The segment at 37–46 (IELLAIEARI) is beta-strand 2. Residues 47-70 (VIASVETYLKYAEAVGLTQSAAVP) form an alpha helix 2 region.

It belongs to the gas vesicle GvpA family. In terms of assembly, the gas vesicle shell is 2 nm thick and consists of a single layer of this protein. It forms helical ribs nearly perpendicular to the long axis of the vesicle.

The protein resides in the gas vesicle shell. In terms of biological role, gas vesicles (GV) are hollow, gas filled proteinaceous nanostructures found in some microorganisms. During planktonic growth they allow positioning of the organism at a favorable depth for light or nutrient acquisition. GVs are highly permeable to gas. GvpA forms the protein shell. The ratio of GvpA:GvpC is estimated to be 33:1 and more recently 25:1. The protein is Gas vesicle protein A of Dolichospermum flosaquae (Anabaena flos-aquae).